The primary structure comprises 457 residues: Argininosuccinate lyase (457 aa).

The protein belongs to the lyase 1 family. Argininosuccinate lyase subfamily.

The protein localises to the cytoplasm. The enzyme catalyses 2-(N(omega)-L-arginino)succinate = fumarate + L-arginine. The protein operates within amino-acid biosynthesis; L-arginine biosynthesis; L-arginine from L-ornithine and carbamoyl phosphate: step 3/3. This Escherichia coli O9:H4 (strain HS) protein is Argininosuccinate lyase.